The primary structure comprises 214 residues: ATP-dependent Clp protease proteolytic subunit (214 aa).

The active-site Nucleophile is S113. Residue H138 is part of the active site.

It belongs to the peptidase S14 family. As to quaternary structure, fourteen ClpP subunits assemble into 2 heptameric rings which stack back to back to give a disk-like structure with a central cavity, resembling the structure of eukaryotic proteasomes.

Its subcellular location is the cytoplasm. The enzyme catalyses Hydrolysis of proteins to small peptides in the presence of ATP and magnesium. alpha-casein is the usual test substrate. In the absence of ATP, only oligopeptides shorter than five residues are hydrolyzed (such as succinyl-Leu-Tyr-|-NHMec, and Leu-Tyr-Leu-|-Tyr-Trp, in which cleavage of the -Tyr-|-Leu- and -Tyr-|-Trp bonds also occurs).. In terms of biological role, cleaves peptides in various proteins in a process that requires ATP hydrolysis. Has a chymotrypsin-like activity. Plays a major role in the degradation of misfolded proteins. The protein is ATP-dependent Clp protease proteolytic subunit of Alkalilimnicola ehrlichii (strain ATCC BAA-1101 / DSM 17681 / MLHE-1).